Reading from the N-terminus, the 163-residue chain is Nucleotide-binding protein CJE0423 (163 aa).

Belongs to the YajQ family.

Nucleotide-binding protein. This chain is Nucleotide-binding protein CJE0423, found in Campylobacter jejuni (strain RM1221).